A 249-amino-acid polypeptide reads, in one-letter code: Triosephosphate isomerase (249 aa).

Residue 9–11 coordinates substrate; that stretch reads NWK. His95 functions as the Electrophile in the catalytic mechanism. Glu167 serves as the catalytic Proton acceptor. Substrate contacts are provided by residues Gly173, Ser213, and 234–235; that span reads GG.

It belongs to the triosephosphate isomerase family. As to quaternary structure, homodimer.

It localises to the cytoplasm. The enzyme catalyses D-glyceraldehyde 3-phosphate = dihydroxyacetone phosphate. Its pathway is carbohydrate biosynthesis; gluconeogenesis. The protein operates within carbohydrate degradation; glycolysis; D-glyceraldehyde 3-phosphate from glycerone phosphate: step 1/1. Its function is as follows. Involved in the gluconeogenesis. Catalyzes stereospecifically the conversion of dihydroxyacetone phosphate (DHAP) to D-glyceraldehyde-3-phosphate (G3P). The polypeptide is Triosephosphate isomerase (Dictyoglomus thermophilum (strain ATCC 35947 / DSM 3960 / H-6-12)).